Reading from the N-terminus, the 228-residue chain is UPF0134 protein MPN_137 (228 aa).

The protein belongs to the UPF0134 family.

This Mycoplasma pneumoniae (strain ATCC 29342 / M129 / Subtype 1) (Mycoplasmoides pneumoniae) protein is UPF0134 protein MPN_137.